The primary structure comprises 155 residues: Small ribosomal subunit protein uS7c (155 aa).

This sequence belongs to the universal ribosomal protein uS7 family. Part of the 30S ribosomal subunit.

It is found in the plastid. The protein resides in the chloroplast. In terms of biological role, one of the primary rRNA binding proteins, it binds directly to 16S rRNA where it nucleates assembly of the head domain of the 30S subunit. The sequence is that of Small ribosomal subunit protein uS7c from Beta vulgaris (Sugar beet).